A 256-amino-acid chain; its full sequence is Undecaprenyl-diphosphatase (256 aa).

The next 8 helical transmembrane spans lie at 1-21 (MTILDSIILGAIEGFTEFLPI), 39-59 (NAINKAYEVIIQFSAILAVIF), 70-90 (IDLWMKVFIAFLPLAIIGFIF), 97-117 (LFSLHVVAVMFIVGGVVFLIV), 134-154 (AISLKQSLIIGFAQIFALIPG), 176-196 (AEFSFLLAFPVMGAVTAYDLL), 205-225 (ANLIILGVGFVTSFVVAYLSI), and 235-255 (FTFFFFGVYRIVFGVILLLFF).

Belongs to the UppP family.

The protein localises to the cell inner membrane. The catalysed reaction is di-trans,octa-cis-undecaprenyl diphosphate + H2O = di-trans,octa-cis-undecaprenyl phosphate + phosphate + H(+). In terms of biological role, catalyzes the dephosphorylation of undecaprenyl diphosphate (UPP). Confers resistance to bacitracin. The polypeptide is Undecaprenyl-diphosphatase (Sulfurimonas denitrificans (strain ATCC 33889 / DSM 1251) (Thiomicrospira denitrificans (strain ATCC 33889 / DSM 1251))).